The following is a 712-amino-acid chain: Potassium transporter 1 (712 aa).

At 1 to 19 (MNQSPSLIEQGISQQHLKT) the chain is on the cytoplasmic side. A helical membrane pass occupies residues 20 to 40 (LSCANVLTLAYQSLGVIYGDL). The Extracellular segment spans residues 41-67 (STSPLYVYKTTFSGKLSLHEDDEEIFG). Residues 68-88 (VFSFIFWTFTLIALFKYVFIV) traverse the membrane as a helical segment. Residues 89 to 154 (LSADDNGEGG…FFEKHPKSQK (66 aa)) are Cytoplasmic-facing. Residues 155–175 (CLLLFVLLGTCMAIGDSVLTP) traverse the membrane as a helical segment. At 176 to 189 (TISVLSAVSGVKLK) the chain is on the extracellular side. The helical transmembrane segment at 190–210 (IPNLHENYVVIIACIILVAIF) threads the bilayer. Residues 211–219 (SVQRYGTHR) lie on the Cytoplasmic side of the membrane. Residues 220 to 240 (VAFIFAPISTAWLLSISSIGV) traverse the membrane as a helical segment. The Extracellular segment spans residues 241–267 (YNTIKWNPRIVSALSPVYMYKFLRSTG). The chain crosses the membrane as a helical span at residues 268–288 (VEGWVSLGGVVLSITGVETMF). Residues 289 to 300 (ADLGHFSSLSIK) are Cytoplasmic-facing. Residues 301–321 (VAFSFFVYPCLILAYMGEAAF) traverse the membrane as a helical segment. The Extracellular segment spans residues 322 to 340 (LSKHHEDIQQSFYKAIPEP). Residues 341–361 (VFWPVFIVATFAAVVGSQAVI) form a helical membrane-spanning segment. Over 362-392 (SATFSIISQCCALDCFPRVKIIHTSSKIHGQ) the chain is Cytoplasmic. A helical membrane pass occupies residues 393–413 (IYIPEVNWMLMCLCLAVTIGL). At 414-424 (RDTNMMGHAYG) the chain is on the extracellular side. Residues 425–445 (LAVTSVMLVTTCLMTLVMTIV) form a helical membrane-spanning segment. Over 446-449 (WKQR) the chain is Cytoplasmic. The chain crosses the membrane as a helical span at residues 450 to 470 (IITVLAFVVFFGSIELLYFSS). Over 471–474 (CVYK) the chain is Extracellular. A helical transmembrane segment spans residues 475–495 (VPEGGWIPILLSLTFMAVMYI). Over 496–712 (WNYGTTKKHE…LLEVGMVYYV (217 aa)) the chain is Cytoplasmic.

It belongs to the HAK/KUP transporter (TC 2.A.72.3) family. As to expression, detected in the whole mature plant but preferentially expressed in roots and stems, and in potassium-starved plants.

Its subcellular location is the cell membrane. Its function is as follows. High-affinity potassium transporter that could play a major role in the uptake of potassium from the rhizosphere. May act as a low-affinity potassium transporter under high potassium concentrations. Could also transport rubidium. In Arabidopsis thaliana (Mouse-ear cress), this protein is Potassium transporter 1 (POT1).